The following is a 455-amino-acid chain: Protein chibby homolog 2 (455 aa).

Residues serine 41, serine 86, serine 89, serine 97, serine 124, serine 144, serine 148, and serine 150 each carry the phosphoserine modification. Positions 160–197 (KRLAKECLLQENKTLREENRALREENRMLRKENKILQV) form a coiled coil. Serine 211 and serine 225 each carry phosphoserine. Positions 240-266 (GRENSTLQLLREENRALQQLLEQRKAY) form a coiled coil. The disordered stretch occupies residues 267-318 (WAQPDEKAASTEEIKPISSPHEEPHGLLPDPGPGLPSPFEEPKGLPAPPDDS). Residues 270-291 (PDEKAASTEEIKPISSPHEEPH) show a composition bias toward basic and acidic residues. Serine 276 and serine 332 each carry phosphoserine. Residues 350–421 (SQSLELLREM…KLKLQQKLVI (72 aa)) adopt a coiled-coil conformation.

Belongs to the chibby family. SPERT subfamily. In terms of assembly, homodimer. Binds to NEK1.

The protein is Protein chibby homolog 2 (CBY2) of Bos taurus (Bovine).